The chain runs to 259 residues: Global transcriptional regulator CodY (259 aa).

Residues 1–155 (MALLQKTRII…GATVVGMEIL (155 aa)) form a GAF domain region. The H-T-H motif DNA-binding region spans 203–222 (ASKIADRVGITRSVIVNALR). A Phosphoserine modification is found at Ser-215.

Belongs to the CodY family.

It is found in the cytoplasm. In terms of biological role, DNA-binding global transcriptional regulator which is involved in the adaptive response to starvation and acts by directly or indirectly controlling the expression of numerous genes in response to nutrient availability. During rapid exponential growth, CodY is highly active and represses genes whose products allow adaptation to nutrient depletion. This Bacillus pumilus (strain SAFR-032) protein is Global transcriptional regulator CodY.